A 304-amino-acid polypeptide reads, in one-letter code: UDP-3-O-acyl-N-acetylglucosamine deacetylase (304 aa).

H78, H237, and D241 together coordinate Zn(2+). The Proton donor role is filled by H264.

The protein belongs to the LpxC family. Zn(2+) is required as a cofactor.

It catalyses the reaction a UDP-3-O-[(3R)-3-hydroxyacyl]-N-acetyl-alpha-D-glucosamine + H2O = a UDP-3-O-[(3R)-3-hydroxyacyl]-alpha-D-glucosamine + acetate. It participates in glycolipid biosynthesis; lipid IV(A) biosynthesis; lipid IV(A) from (3R)-3-hydroxytetradecanoyl-[acyl-carrier-protein] and UDP-N-acetyl-alpha-D-glucosamine: step 2/6. Catalyzes the hydrolysis of UDP-3-O-myristoyl-N-acetylglucosamine to form UDP-3-O-myristoylglucosamine and acetate, the committed step in lipid A biosynthesis. This chain is UDP-3-O-acyl-N-acetylglucosamine deacetylase, found in Xylella fastidiosa (strain Temecula1 / ATCC 700964).